A 354-amino-acid polypeptide reads, in one-letter code: Holliday junction branch migration complex subunit RuvB (354 aa).

Residues 1-38 (MSDFERTEFELPPGVGHSQNEDLNPQQTAGDSDIDTSL) are disordered. A large ATPase domain (RuvB-L) region spans residues 2–199 (SDFERTEFEL…FGFTAQMEFY (198 aa)). Over residues 17–30 (HSQNEDLNPQQTAG) the composition is skewed to polar residues. ATP-binding positions include Leu38, Arg39, Gly80, Lys83, Thr84, Thr85, 146–148 (EDF), Arg189, Tyr199, and Arg236. Thr84 contacts Mg(2+). The segment at 200 to 270 (DTADLTRVVT…VARAALLVFD (71 aa)) is small ATPAse domain (RuvB-S). The interval 273–354 (ESGLDRLDRA…LEPPEGTIGL (82 aa)) is head domain (RuvB-H). DNA contacts are provided by Arg328 and Arg333.

Belongs to the RuvB family. As to quaternary structure, homohexamer. Forms an RuvA(8)-RuvB(12)-Holliday junction (HJ) complex. HJ DNA is sandwiched between 2 RuvA tetramers; dsDNA enters through RuvA and exits via RuvB. An RuvB hexamer assembles on each DNA strand where it exits the tetramer. Each RuvB hexamer is contacted by two RuvA subunits (via domain III) on 2 adjacent RuvB subunits; this complex drives branch migration. In the full resolvosome a probable DNA-RuvA(4)-RuvB(12)-RuvC(2) complex forms which resolves the HJ.

It localises to the cytoplasm. It carries out the reaction ATP + H2O = ADP + phosphate + H(+). Its function is as follows. The RuvA-RuvB-RuvC complex processes Holliday junction (HJ) DNA during genetic recombination and DNA repair, while the RuvA-RuvB complex plays an important role in the rescue of blocked DNA replication forks via replication fork reversal (RFR). RuvA specifically binds to HJ cruciform DNA, conferring on it an open structure. The RuvB hexamer acts as an ATP-dependent pump, pulling dsDNA into and through the RuvAB complex. RuvB forms 2 homohexamers on either side of HJ DNA bound by 1 or 2 RuvA tetramers; 4 subunits per hexamer contact DNA at a time. Coordinated motions by a converter formed by DNA-disengaged RuvB subunits stimulates ATP hydrolysis and nucleotide exchange. Immobilization of the converter enables RuvB to convert the ATP-contained energy into a lever motion, pulling 2 nucleotides of DNA out of the RuvA tetramer per ATP hydrolyzed, thus driving DNA branch migration. The RuvB motors rotate together with the DNA substrate, which together with the progressing nucleotide cycle form the mechanistic basis for DNA recombination by continuous HJ branch migration. Branch migration allows RuvC to scan DNA until it finds its consensus sequence, where it cleaves and resolves cruciform DNA. The polypeptide is Holliday junction branch migration complex subunit RuvB (Corynebacterium jeikeium (strain K411)).